The sequence spans 229 residues: Heptaprenylglyceryl phosphate synthase (229 aa).

Residues Asp-13 and Thr-39 each coordinate Mg(2+).

The protein belongs to the GGGP/HepGP synthase family. Homodimer. Mg(2+) is required as a cofactor.

It carries out the reaction sn-glycerol 1-phosphate + all-trans-heptaprenyl diphosphate = 3-heptaprenyl-sn-glycero-1-phosphate + diphosphate. It functions in the pathway membrane lipid metabolism; glycerophospholipid metabolism. Functionally, prenyltransferase that catalyzes in vivo the transfer of the heptaprenyl moiety of heptaprenyl pyrophosphate (HepPP; 35 carbon atoms) to the C3 hydroxyl of sn-glycerol-1-phosphate (G1P), producing heptaprenylglyceryl phosphate (HepGP). This reaction is an ether-bond-formation step in the biosynthesis of archaea-type G1P-based membrane lipids found in Bacillales. This Lysinibacillus sphaericus (strain C3-41) protein is Heptaprenylglyceryl phosphate synthase.